Reading from the N-terminus, the 79-residue chain is uncharacterized protein (79 aa).

This is an uncharacterized protein from Bacillus subtilis (strain 168).